A 174-amino-acid chain; its full sequence is Shikimate kinase 2 (174 aa).

Position 12–17 (glycine 12–threonine 17) interacts with ATP. 2 residues coordinate Mg(2+): threonine 16 and aspartate 32. The substrate site is built by aspartate 34, arginine 58, and glycine 79. Residues glutamate 112–lysine 126 form an LID domain region. Arginine 120 lines the ATP pocket. Position 139 (arginine 139) interacts with substrate. Glutamine 155 contacts ATP.

Belongs to the shikimate kinase family. AroL subfamily. Monomer. Mg(2+) is required as a cofactor.

The protein localises to the cytoplasm. It carries out the reaction shikimate + ATP = 3-phosphoshikimate + ADP + H(+). Its pathway is metabolic intermediate biosynthesis; chorismate biosynthesis; chorismate from D-erythrose 4-phosphate and phosphoenolpyruvate: step 5/7. Catalyzes the specific phosphorylation of the 3-hydroxyl group of shikimic acid using ATP as a cosubstrate. In Enterobacter sp. (strain 638), this protein is Shikimate kinase 2.